Reading from the N-terminus, the 352-residue chain is Biotin synthase (352 aa).

The 219-residue stretch at asparagine 44–lysine 262 folds into the Radical SAM core domain. [4Fe-4S] cluster-binding residues include cysteine 59, cysteine 63, and cysteine 66. The [2Fe-2S] cluster site is built by cysteine 103, cysteine 134, cysteine 194, and arginine 266.

It belongs to the radical SAM superfamily. Biotin synthase family. As to quaternary structure, homodimer. [4Fe-4S] cluster is required as a cofactor. [2Fe-2S] cluster serves as cofactor.

The enzyme catalyses (4R,5S)-dethiobiotin + (sulfur carrier)-SH + 2 reduced [2Fe-2S]-[ferredoxin] + 2 S-adenosyl-L-methionine = (sulfur carrier)-H + biotin + 2 5'-deoxyadenosine + 2 L-methionine + 2 oxidized [2Fe-2S]-[ferredoxin]. Its pathway is cofactor biosynthesis; biotin biosynthesis; biotin from 7,8-diaminononanoate: step 2/2. Catalyzes the conversion of dethiobiotin (DTB) to biotin by the insertion of a sulfur atom into dethiobiotin via a radical-based mechanism. The chain is Biotin synthase from Pseudomonas aeruginosa (strain LESB58).